Consider the following 288-residue polypeptide: Keratin-associated protein 5-4 (288 aa).

9 tandem repeats follow at residues 49-52 (CCVP), 55-58 (CCKP), 61-64 (CCVP), 201-204 (CCKP), 220-223 (CCKP), 239-242 (CCKP), 249-252 (CCKP), 268-271 (CCNP), and 278-281 (CCVP). Positions 49 to 281 (CCVPICCCKP…CCSQSSCCVP (233 aa)) are 9 X 4 AA repeats of C-C-X-P.

The protein belongs to the KRTAP type 5 family. As to quaternary structure, interacts with hair keratins. As to expression, restricted to hair root, not detected in any other tissues.

In the hair cortex, hair keratin intermediate filaments are embedded in an interfilamentous matrix, consisting of hair keratin-associated protein (KRTAP), which are essential for the formation of a rigid and resistant hair shaft through their extensive disulfide bond cross-linking with abundant cysteine residues of hair keratins. The matrix proteins include the high-sulfur and high-glycine-tyrosine keratins. This chain is Keratin-associated protein 5-4 (KRTAP5-4), found in Homo sapiens (Human).